Reading from the N-terminus, the 81-residue chain is Protein translocase subunit SecE (81 aa).

Residues 50–70 form a helical membrane-spanning segment; the sequence is VAVILMVILVSTVIYFVDQIF.

Belongs to the SecE/SEC61-gamma family. In terms of assembly, component of the Sec protein translocase complex. Heterotrimer consisting of SecY, SecE and SecG subunits. The heterotrimers can form oligomers, although 1 heterotrimer is thought to be able to translocate proteins. Interacts with the ribosome. Interacts with SecDF, and other proteins may be involved. Interacts with SecA.

Its subcellular location is the cell inner membrane. It localises to the cellular thylakoid membrane. Its function is as follows. Essential subunit of the Sec protein translocation channel SecYEG. Clamps together the 2 halves of SecY. May contact the channel plug during translocation. The sequence is that of Protein translocase subunit SecE from Synechocystis sp. (strain ATCC 27184 / PCC 6803 / Kazusa).